Consider the following 183-residue polypeptide: NEDD8-conjugating enzyme Ubc12 (183 aa).

Residue Met-1 is modified to N-acetylmethionine. Positions 1–28 (MIKLFSLKQQKKEEESAGGTKGSSKKAS) are disordered. The UBC core domain maps to 29–173 (AAQLRIQKDI…VQRSMRGGYI (145 aa)). The active-site Glycyl thioester intermediate is the Cys-111.

This sequence belongs to the ubiquitin-conjugating enzyme family. UBC12 subfamily. In terms of processing, the acetylation of Met-1 increases affinity for DCUN1D1 by about 2 orders of magnitude and is crucial for NEDD8 transfer to cullins.

It carries out the reaction [E1 NEDD8-activating enzyme]-S-[NEDD8 protein]-yl-L-cysteine + [E2 NEDD8-conjugating enzyme]-L-cysteine = [E1 NEDD8-activating enzyme]-L-cysteine + [E2 NEDD8-conjugating enzyme]-S-[NEDD8-protein]-yl-L-cysteine.. It functions in the pathway protein modification; protein neddylation. Accepts the ubiquitin-like protein NEDD8 from the UBA3-NAE1 E1 complex and catalyzes its covalent attachment to other proteins. The specific interaction with the E3 ubiquitin ligase rbx1, but not rbx2, suggests that the rbx1-ube2m complex neddylates specific target proteins, such as cul1, cul2, cul3 and cul4. Involved in cell proliferation. The chain is NEDD8-conjugating enzyme Ubc12 (ube2m) from Xenopus laevis (African clawed frog).